Here is an 886-residue protein sequence, read N- to C-terminus: Protein translocase subunit SecA (886 aa).

ATP-binding positions include glutamine 81, 99 to 103 (GEGKT), and aspartate 489.

It belongs to the SecA family.

The protein resides in the plastid. It is found in the chloroplast stroma. The protein localises to the chloroplast thylakoid membrane. The catalysed reaction is ATP + H2O + cellular proteinSide 1 = ADP + phosphate + cellular proteinSide 2.. Functionally, has a central role in coupling the hydrolysis of ATP to the transfer of proteins across the thylakoid membrane. The polypeptide is Protein translocase subunit SecA (Phaeodactylum tricornutum (strain CCAP 1055/1)).